The following is a 436-amino-acid chain: Alpha-galactosidase mel1 (436 aa).

An N-terminal signal peptide occupies residues 1–24 (MISISFLNCFFLVFLFLFFSDVHG). An intrachain disulfide couples C45 to C77. The N-linked (GlcNAc...) asparagine glycan is linked to N84. A disulfide bond links C126 and C156. D154 (nucleophile) is an active-site residue. N-linked (GlcNAc...) asparagine glycosylation occurs at N180. Residue D214 is the Proton donor of the active site.

Belongs to the glycosyl hydrolase 27 family.

Its subcellular location is the endoplasmic reticulum lumen. It is found in the secreted. It carries out the reaction Hydrolysis of terminal, non-reducing alpha-D-galactose residues in alpha-D-galactosides, including galactose oligosaccharides, galactomannans and galactolipids.. Its function is as follows. Secreted alpha-galactosidase required for catabolic conversion of melibiose to glucose and galactose. This is Alpha-galactosidase mel1 (mel1) from Schizosaccharomyces pombe (strain 972 / ATCC 24843) (Fission yeast).